The chain runs to 202 residues: Histone chaperone ASF1B (202 aa).

Residues 1-156 (MAKVSVLNVA…TRFHINWDNN (156 aa)) are interaction with histone H3 and CHAF1B. Phosphoserine; by TLK2 is present on Ser-198.

It belongs to the ASF1 family. Interacts with histone H3 (via C-terminus), including histone H3.1, H3.2 and H3.3, and histone H4; the interaction with H3 is direct. Interacts with the CHAF1A, CHAF1B and RBBP4 subunits of the CAF-1 complex. Interacts with HAT1, NASP and TAF1. Found in a soluble complex with NASP and histones H3 and H4; the interaction with NASP is probably indirect and mediated by H3-H4. Interacts with CDAN1. Found in a cytosolic complex with CDAN1, ASF1A, IPO4 and histones H3.1 and H4. Interacts with CREBBP. Post-translationally, phosphorylated by TLK1 and TLK2.

The protein resides in the nucleus. It localises to the cytoplasm. The protein localises to the cytosol. Histone chaperone that facilitates histone deposition and histone exchange and removal during nucleosome assembly and disassembly. Cooperates with chromatin assembly factor 1 (CAF-1) to promote replication-dependent chromatin assembly. Also involved in the nuclear import of the histone H3-H4 dimer together with importin-4 (IPO4): specifically recognizes and binds newly synthesized histones with the monomethylation of H3 'Lys-9' (H3K9me1) and diacetylation at 'Lys-5' and 'Lys-12' of H4 (H4K5ac and H4K12ac) marks in the cytosol. Does not participate in replication-independent nucleosome deposition which is mediated by ASF1A and HIRA. Required for gonad development. The chain is Histone chaperone ASF1B (ASF1B) from Bos taurus (Bovine).